A 118-amino-acid polypeptide reads, in one-letter code: Large ribosomal subunit protein bL20 (118 aa).

This sequence belongs to the bacterial ribosomal protein bL20 family.

Functionally, binds directly to 23S ribosomal RNA and is necessary for the in vitro assembly process of the 50S ribosomal subunit. It is not involved in the protein synthesizing functions of that subunit. This is Large ribosomal subunit protein bL20 from Lacticaseibacillus casei (strain BL23) (Lactobacillus casei).